A 121-amino-acid polypeptide reads, in one-letter code: uncharacterized protein (121 aa).

This sequence to M.jannaschii MJ0017 and MJ1466.

This is an uncharacterized protein from Aquifex aeolicus (strain VF5).